A 294-amino-acid polypeptide reads, in one-letter code: tRNA dimethylallyltransferase (294 aa).

10–17 (GPTAVGKT) provides a ligand contact to ATP. 12-17 (TAVGKT) lines the substrate pocket. The tract at residues 35–38 (DSQQ) is interaction with substrate tRNA.

The protein belongs to the IPP transferase family. As to quaternary structure, monomer. Requires Mg(2+) as cofactor.

The enzyme catalyses adenosine(37) in tRNA + dimethylallyl diphosphate = N(6)-dimethylallyladenosine(37) in tRNA + diphosphate. Catalyzes the transfer of a dimethylallyl group onto the adenine at position 37 in tRNAs that read codons beginning with uridine, leading to the formation of N6-(dimethylallyl)adenosine (i(6)A). This chain is tRNA dimethylallyltransferase, found in Streptococcus pneumoniae (strain P1031).